The following is a 1501-amino-acid chain: Neither inactivation nor afterpotential protein C (1501 aa).

The Protein kinase domain maps to 16-282 (FEIYEEIAQG…MVEMVEHPFL (267 aa)). Residues 22–30 (IAQGVNAKV) and K45 each bind ATP. Catalysis depends on D145, which acts as the Proton acceptor. S183 is subject to Phosphoserine. Residues 332–1037 (MYPEDLAALE…FLARLYELQV (706 aa)) enclose the Myosin motor domain. The interval 913–934 (LTLLKMLSQNANLGVHFVRCIR) is actin-binding. IQ domains lie at 1036–1065 (QVKK…FKLG) and 1072–1101 (HDVA…EKSG). An interaction with rtp region spans residues 1043–1271 (VQSMMRALLA…RMGESDNIYN (229 aa)). A non alpha-helical, C-terminal domain region spans residues 1066–1501 (KKGPEHHDVA…ITLSGYAVDI (436 aa)). Disordered regions lie at residues 1308 to 1364 (NWGV…DPVR) and 1390 to 1473 (KTNY…EDSN). The segment covering 1326–1335 (APPPPPPPMP) has biased composition (pro residues). Over residues 1336–1358 (SSNYYRNNPNQQQRNYQQRSSYP) the composition is skewed to low complexity. The span at 1405–1414 (NNRRGSDSGD) shows a compositional bias: basic and acidic residues. Over residues 1449–1463 (FGQQQRAPTLRQSPA) the composition is skewed to polar residues.

It in the C-terminal section; belongs to the TRAFAC class myosin-kinesin ATPase superfamily. Myosin family. In the N-terminal section; belongs to the protein kinase superfamily. Ser/Thr protein kinase family. Interacts with rtp. Expressed in the phototransducing compartment of photoreceptor cells, the rhabdomeres (at protein level).

Its subcellular location is the cytoplasm. It is found in the cytoskeleton. It localises to the nucleus. The protein localises to the membrane. The protein resides in the cell projection. Its subcellular location is the rhabdomere membrane. It catalyses the reaction L-seryl-[protein] + ATP = O-phospho-L-seryl-[protein] + ADP + H(+). The catalysed reaction is L-threonyl-[protein] + ATP = O-phospho-L-threonyl-[protein] + ADP + H(+). Its function is as follows. Required for photoreceptor cell function. The ninaC proteins combines putative serine/threonine-protein kinase and myosin activities. Essential for the expression and stability of the rtp protein in the photoreceptors. The rtp/ninaC complex is required for stability of inad and inac and the normal termination of phototransduction in the retina. The polypeptide is Neither inactivation nor afterpotential protein C (ninaC) (Drosophila melanogaster (Fruit fly)).